A 214-amino-acid polypeptide reads, in one-letter code: Probable transaldolase (214 aa).

The Schiff-base intermediate with substrate role is filled by K83.

Belongs to the transaldolase family. Type 3B subfamily.

The protein localises to the cytoplasm. The catalysed reaction is D-sedoheptulose 7-phosphate + D-glyceraldehyde 3-phosphate = D-erythrose 4-phosphate + beta-D-fructose 6-phosphate. It functions in the pathway carbohydrate degradation; pentose phosphate pathway; D-glyceraldehyde 3-phosphate and beta-D-fructose 6-phosphate from D-ribose 5-phosphate and D-xylulose 5-phosphate (non-oxidative stage): step 2/3. Transaldolase is important for the balance of metabolites in the pentose-phosphate pathway. The protein is Probable transaldolase of Alkaliphilus metalliredigens (strain QYMF).